Consider the following 333-residue polypeptide: Ketoreductase sphI (333 aa).

Residue Tyr167 coordinates NADP(+).

Belongs to the NAD(P)-dependent epimerase/dehydratase family. Dihydroflavonol-4-reductase subfamily.

In terms of biological role, ketoreductase; part of the gene cluster that mediates the biosynthesis of sphingofungins, bioactive molecules acting as sphingolipid inhibitors via inhibiting serine palmitoyl transferase (SPT). Does not seem to be involved in any biosynthetic process leading to the production of sphingofungins, but might be connected to a regulation or resistance mechanism. This chain is Ketoreductase sphI, found in Aspergillus fumigatus (strain CBS 144.89 / FGSC A1163 / CEA10) (Neosartorya fumigata).